A 465-amino-acid chain; its full sequence is Cerebellar degeneration-related protein 2-like (465 aa).

3 coiled-coil regions span residues 31-64, 91-142, and 188-266; these read AAEL…HEIE, ARDL…LEQL, and LEQE…YLLA. The interval 282–315 is disordered; that stretch reads APEADDPQPGSGDDSNAQDGVSSPAASPSHAVRK. 3 positions are modified to phosphoserine: S308, S318, and S344. Residues 350–377 adopt a coiled-coil conformation; the sequence is MSILREVDEQYHALLEKYEELLSKCRQH. The tract at residues 382–421 is disordered; the sequence is RHAGVQTSRPISRDSSWRDLLGGEESPGEGKAGEKSLSQH. A Phosphoserine modification is found at S407.

This sequence belongs to the CDR2 family.

The sequence is that of Cerebellar degeneration-related protein 2-like (Cdr2l) from Mus musculus (Mouse).